The following is a 249-amino-acid chain: Exosome complex component Rrp4 (249 aa).

The S1 motif domain maps to 72 to 143 (GDTIIGLVED…RTISPVLTVK (72 aa)). Positions 151-213 (PLGTVMDIMP…EALIEAINII (63 aa)) constitute a KH domain.

It belongs to the RRP4 family. Component of the archaeal exosome complex. Forms a trimer of Rrp4 and/or Csl4 subunits. The trimer associates with a hexameric ring-like arrangement composed of 3 Rrp41-Rrp42 heterodimers.

The protein resides in the cytoplasm. In terms of biological role, non-catalytic component of the exosome, which is a complex involved in RNA degradation. Increases the RNA binding and the efficiency of RNA degradation. Confers strong poly(A) specificity to the exosome. This is Exosome complex component Rrp4 from Sulfolobus acidocaldarius (strain ATCC 33909 / DSM 639 / JCM 8929 / NBRC 15157 / NCIMB 11770).